The sequence spans 547 residues: Glucose-6-phosphate isomerase (547 aa).

The Proton donor role is filled by glutamate 351. Residues histidine 382 and lysine 509 contribute to the active site.

It belongs to the GPI family.

It localises to the cytoplasm. The catalysed reaction is alpha-D-glucose 6-phosphate = beta-D-fructose 6-phosphate. Its pathway is carbohydrate biosynthesis; gluconeogenesis. It functions in the pathway carbohydrate degradation; glycolysis; D-glyceraldehyde 3-phosphate and glycerone phosphate from D-glucose: step 2/4. Catalyzes the reversible isomerization of glucose-6-phosphate to fructose-6-phosphate. In Coxiella burnetii (strain RSA 493 / Nine Mile phase I), this protein is Glucose-6-phosphate isomerase.